The sequence spans 314 residues: Transmembrane protein 248 (314 aa).

The chain crosses the membrane as a helical span at residues 21–41 (VVFMISVSAMAIAFLTLGYFF). Positions 78 to 106 (LTNDTTTPESTMTSGQARASTQSPQALED) are disordered. Polar residues predominate over residues 80 to 102 (NDTTTPESTMTSGQARASTQSPQ). A run of 3 helical transmembrane segments spans residues 179 to 199 (QVVF…PVTV), 236 to 258 (FWCY…TVIV), and 270 to 290 (LMHT…YAVI).

The protein belongs to the TMEM248 family.

Its subcellular location is the membrane. This Homo sapiens (Human) protein is Transmembrane protein 248 (TMEM248).